We begin with the raw amino-acid sequence, 172 residues long: Shikimate kinase (172 aa).

11–16 (GAGKST) serves as a coordination point for ATP. S15 contacts Mg(2+). Substrate is bound by residues D33, R57, and G79. R117 lines the ATP pocket. Position 136 (R136) interacts with substrate. R153 serves as a coordination point for ATP.

Belongs to the shikimate kinase family. Monomer. Mg(2+) serves as cofactor.

It is found in the cytoplasm. It catalyses the reaction shikimate + ATP = 3-phosphoshikimate + ADP + H(+). It functions in the pathway metabolic intermediate biosynthesis; chorismate biosynthesis; chorismate from D-erythrose 4-phosphate and phosphoenolpyruvate: step 5/7. In terms of biological role, catalyzes the specific phosphorylation of the 3-hydroxyl group of shikimic acid using ATP as a cosubstrate. This chain is Shikimate kinase, found in Pseudomonas fluorescens (strain Pf0-1).